The sequence spans 79 residues: Acyl carrier protein (79 aa).

Residues 2–79 (ASKEEILAGL…QDAVDFIXGA (78 aa)) enclose the Carrier domain. Ser-40 is modified (O-(pantetheine 4'-phosphoryl)serine).

The protein belongs to the acyl carrier protein (ACP) family. In terms of processing, 4'-phosphopantetheine is transferred from CoA to a specific serine of apo-ACP by AcpS. This modification is essential for activity because fatty acids are bound in thioester linkage to the sulfhydryl of the prosthetic group.

It localises to the cytoplasm. It participates in lipid metabolism; fatty acid biosynthesis. In terms of biological role, carrier of the growing fatty acid chain in fatty acid biosynthesis. In Myxococcus xanthus, this protein is Acyl carrier protein.